A 638-amino-acid polypeptide reads, in one-letter code: Neuroendocrine convertase 2 (638 aa).

Residues 1-25 (MKGGCVSQWKAAAGFLFCVMVFASA) form the signal peptide. Positions 26–109 (ERPVFTNHFL…QQEGFDRKKR (84 aa)) are excised as a propeptide. One can recognise a Peptidase S8 domain in the interval 129–453 (QWYLINTGQA…YGVLDAGAMV (325 aa)). Active-site charge relay system residues include D167 and H208. Cystine bridges form between C225–C376 and C317–C347. N-linked (GlcNAc...) asparagine glycosylation is present at N375. The active-site Charge relay system is S384. Residues 461-597 (TVPERFHCVG…TLMLHGTQSA (137 aa)) enclose the P/Homo B domain. C468 and C494 are joined by a disulfide. N-linked (GlcNAc...) asparagine glycosylation is found at N514 and N524.

The protein belongs to the peptidase S8 family. Furin subfamily.

It localises to the cytoplasmic vesicle. The protein localises to the secretory vesicle. Its subcellular location is the secreted. The enzyme catalyses Release of protein hormones and neuropeptides from their precursors, generally by hydrolysis of -Lys-Arg-|- bonds.. In terms of biological role, serine endopeptidase which is involved in the processing of hormone and other protein precursors at sites comprised of pairs of basic amino acid residues. Responsible for the release of glucagon from proglucagon in pancreatic A cells. The polypeptide is Neuroendocrine convertase 2 (PCSK2) (Homo sapiens (Human)).